The chain runs to 329 residues: Phospholipid scramblase 4 (329 aa).

The tract at residues 1–51 is disordered; sequence MSGVVPTAPEQPAGEMENQTKPPDPRPDAPPEYNSHFLPGPPGTAVPPPTG. The interval 1-98 is proline-rich domain (PRD); sequence MSGVVPTAPE…PMPNQSVPIT (98 aa). Residues 1–303 are Cytoplasmic-facing; it reads MSGVVPTAPE…IHFPLDLDVK (303 aa). The short motif at 18 to 25 is the SH3-binding 1 element; the sequence is NQTKPPDP. The PPxY motif signature appears at 30–33; the sequence is PPEY. Residues 39–51 show a composition bias toward pro residues; the sequence is PGPPGTAVPPPTG. Residues 41-49 carry the SH3-binding 2 motif; it reads PPGTAVPPP. Tyr83 and Tyr88 each carry phosphotyrosine; by ABL. The SH3-binding 3 signature appears at 98-106; sequence TWMPGPTPM. S-palmitoyl cysteine attachment occurs at residues Cys197, Cys198, Cys199, Cys201, and Cys202. The Nuclear localization signal signature appears at 271 to 283; that stretch reads NIGSIIRKWNGLL. The chain crosses the membrane as a helical span at residues 304–320; sequence MKAMIFGACFLIDFMYF. Topologically, residues 321 to 329 are extracellular; sequence ERSPPQRSR.

The protein belongs to the phospholipid scramblase family. Interacts with PDCD6. Interacts with KPNA2; this interaction mediates the nucleus import of PLSCR4. It depends on Ca(2+) as a cofactor. Requires Mg(2+) as cofactor. Zn(2+) serves as cofactor. In terms of tissue distribution, expressed in heart, brain, placenta, lung, liver, kidney, pancreas, spleen, thymus, prostate, testis, uterus, small intestine and colon. Not detected in peripheral blood lymphocytes.

It localises to the cell membrane. The protein resides in the nucleus. It catalyses the reaction a 1,2-diacyl-sn-glycero-3-phosphocholine(in) = a 1,2-diacyl-sn-glycero-3-phosphocholine(out). The enzyme catalyses a 1,2-diacyl-sn-glycero-3-phospho-L-serine(in) = a 1,2-diacyl-sn-glycero-3-phospho-L-serine(out). Its function is as follows. Catalyzes metal ion-induced ATP-independent rapid bidirectional and non-specific movement of phospholipids (lipid scrambling or lipid flip-flop) between the inner and outer leaflet of the plasma membrane and participates in the redistribution of phospholipids between membrane leaflets. Metal ions bind to the calcium-binding site and induce conformation change in the protein. Has a greater affi nity for Ca(2+) than Mg(2+) and Zn(2+). The protein is Phospholipid scramblase 4 of Homo sapiens (Human).